The sequence spans 325 residues: Cytochrome c biogenesis protein CcsA (325 aa).

A run of 8 helical transmembrane segments spans residues 14–34 (TFAI…FPNL), 36–56 (GLPA…AALL), 68–88 (ISNL…IHLL), 97–117 (LVGA…AFTL), 142–162 (VMMV…AFLV), 233–253 (VIGL…VWAN), 260–280 (WSWD…AAYL), and 294–314 (AILA…VNLL).

The protein belongs to the CcmF/CycK/Ccl1/NrfE/CcsA family. As to quaternary structure, may interact with ccs1.

It is found in the cellular thylakoid membrane. In terms of biological role, required during biogenesis of c-type cytochromes (cytochrome c6 and cytochrome f) at the step of heme attachment. In Synechococcus sp. (strain ATCC 27144 / PCC 6301 / SAUG 1402/1) (Anacystis nidulans), this protein is Cytochrome c biogenesis protein CcsA.